The sequence spans 356 residues: Histidinol-phosphate aminotransferase (356 aa).

Lys-214 is modified (N6-(pyridoxal phosphate)lysine).

Belongs to the class-II pyridoxal-phosphate-dependent aminotransferase family. Histidinol-phosphate aminotransferase subfamily. As to quaternary structure, homodimer. It depends on pyridoxal 5'-phosphate as a cofactor.

It catalyses the reaction L-histidinol phosphate + 2-oxoglutarate = 3-(imidazol-4-yl)-2-oxopropyl phosphate + L-glutamate. Its pathway is amino-acid biosynthesis; L-histidine biosynthesis; L-histidine from 5-phospho-alpha-D-ribose 1-diphosphate: step 7/9. The sequence is that of Histidinol-phosphate aminotransferase from Escherichia coli O17:K52:H18 (strain UMN026 / ExPEC).